The primary structure comprises 403 residues: 4-hydroxy-3-methylbut-2-enyl diphosphate reductase (403 aa).

[4Fe-4S] cluster is bound at residue cysteine 66. Histidine 96 contributes to the (2E)-4-hydroxy-3-methylbut-2-enyl diphosphate binding site. Histidine 96 serves as a coordination point for dimethylallyl diphosphate. Isopentenyl diphosphate is bound at residue histidine 96. [4Fe-4S] cluster is bound at residue cysteine 157. Histidine 185 provides a ligand contact to (2E)-4-hydroxy-3-methylbut-2-enyl diphosphate. Histidine 185 provides a ligand contact to dimethylallyl diphosphate. Histidine 185 is a binding site for isopentenyl diphosphate. The active-site Proton donor is glutamate 187. Threonine 250 contacts (2E)-4-hydroxy-3-methylbut-2-enyl diphosphate. Residue cysteine 288 participates in [4Fe-4S] cluster binding. The (2E)-4-hydroxy-3-methylbut-2-enyl diphosphate site is built by serine 317, serine 318, asparagine 319, and serine 379. 4 residues coordinate dimethylallyl diphosphate: serine 317, serine 318, asparagine 319, and serine 379. Isopentenyl diphosphate contacts are provided by serine 317, serine 318, asparagine 319, and serine 379.

Belongs to the IspH family. Requires [4Fe-4S] cluster as cofactor.

It catalyses the reaction isopentenyl diphosphate + 2 oxidized [2Fe-2S]-[ferredoxin] + H2O = (2E)-4-hydroxy-3-methylbut-2-enyl diphosphate + 2 reduced [2Fe-2S]-[ferredoxin] + 2 H(+). It carries out the reaction dimethylallyl diphosphate + 2 oxidized [2Fe-2S]-[ferredoxin] + H2O = (2E)-4-hydroxy-3-methylbut-2-enyl diphosphate + 2 reduced [2Fe-2S]-[ferredoxin] + 2 H(+). It functions in the pathway isoprenoid biosynthesis; dimethylallyl diphosphate biosynthesis; dimethylallyl diphosphate from (2E)-4-hydroxy-3-methylbutenyl diphosphate: step 1/1. The protein operates within isoprenoid biosynthesis; isopentenyl diphosphate biosynthesis via DXP pathway; isopentenyl diphosphate from 1-deoxy-D-xylulose 5-phosphate: step 6/6. Functionally, catalyzes the conversion of 1-hydroxy-2-methyl-2-(E)-butenyl 4-diphosphate (HMBPP) into a mixture of isopentenyl diphosphate (IPP) and dimethylallyl diphosphate (DMAPP). Acts in the terminal step of the DOXP/MEP pathway for isoprenoid precursor biosynthesis. This chain is 4-hydroxy-3-methylbut-2-enyl diphosphate reductase, found in Picosynechococcus sp. (strain ATCC 27264 / PCC 7002 / PR-6) (Agmenellum quadruplicatum).